Consider the following 221-residue polypeptide: Chaperone protein TorD (221 aa).

Belongs to the TorD/DmsD family. TorD subfamily.

It localises to the cytoplasm. Its function is as follows. Involved in the biogenesis of TorA. Acts on TorA before the insertion of the molybdenum cofactor and, as a result, probably favors a conformation of the apoenzyme that is competent for acquiring the cofactor. This is Chaperone protein TorD from Psychrobacter sp. (strain PRwf-1).